A 2458-amino-acid polypeptide reads, in one-letter code: Highly reducing polyketide synthase alnA (2458 aa).

Residues threonine 48 to aspartate 473 enclose the Ketosynthase family 3 (KS3) domain. Residues cysteine 221, histidine 356, and histidine 396 each act as for beta-ketoacyl synthase activity in the active site. Residues histidine 488–glutamine 515 are disordered. Residues aspartate 499–glutamine 515 show a composition bias toward low complexity. Residues valine 609 to lysine 932 are malonyl-CoA:ACP transacylase (MAT) domain. The active-site For malonyltransferase activity is serine 697. The segment at asparagine 1000–alanine 1130 is N-terminal hotdog fold. In terms of domain architecture, PKS/mFAS DH spans asparagine 1000 to threonine 1307. A dehydratase (DH) domain region spans residues aspartate 1001–alanine 1305. Catalysis depends on histidine 1032, which acts as the Proton acceptor; for dehydratase activity. The tract at residues threonine 1148–threonine 1307 is C-terminal hotdog fold. Aspartate 1218 acts as the Proton donor; for dehydratase activity in catalysis. The enoylreductase (ER) domain stretch occupies residues glycine 1740–alanine 2051. A ketoreductase (KR) domain region spans residues lysine 2076–asparagine 2264. One can recognise a Carrier domain in the interval serine 2359–serine 2441. Serine 2401 bears the O-(pantetheine 4'-phosphoryl)serine mark.

The protein operates within polyketide biosynthesis. Highly reducing polyketide synthase; part of the gene cluster that mediates the biosynthesis of asperlin, a polyketide showing anti-inflammatory, antitumor and antibiotic activities. The first step of the asperlin biosynthesis is the production of the intermediate 2,4,6-octatrienoic acid by the highly redusing polyketide synthase alnA with cleavage of the PKS product by the esterase alnB. 2,4,6-octatrienoic acid is further converted to asperlin via several steps involving the remaining enzymes from the cluster. This is Highly reducing polyketide synthase alnA from Emericella nidulans (strain FGSC A4 / ATCC 38163 / CBS 112.46 / NRRL 194 / M139) (Aspergillus nidulans).